Here is a 128-residue protein sequence, read N- to C-terminus: Sulfurtransferase TusD (128 aa).

The Cysteine persulfide intermediate role is filled by C78.

Belongs to the DsrE/TusD family. As to quaternary structure, heterohexamer, formed by a dimer of trimers. The hexameric TusBCD complex contains 2 copies each of TusB, TusC and TusD. The TusBCD complex interacts with TusE.

The protein localises to the cytoplasm. In terms of biological role, part of a sulfur-relay system required for 2-thiolation of 5-methylaminomethyl-2-thiouridine (mnm(5)s(2)U) at tRNA wobble positions. Accepts sulfur from TusA and transfers it in turn to TusE. The polypeptide is Sulfurtransferase TusD (Shigella dysenteriae serotype 1 (strain Sd197)).